A 245-amino-acid polypeptide reads, in one-letter code: Enolase-phosphatase E1 (245 aa).

2 residues coordinate Mg(2+): Asp14 and Glu16. Substrate contacts are provided by residues 141 to 142 (SS) and Lys175. Mg(2+) is bound at residue Asp200.

It belongs to the HAD-like hydrolase superfamily. MasA/MtnC family. Monomer. The cofactor is Mg(2+).

It is found in the cytoplasm. It localises to the nucleus. It carries out the reaction 5-methylsulfanyl-2,3-dioxopentyl phosphate + H2O = 1,2-dihydroxy-5-(methylsulfanyl)pent-1-en-3-one + phosphate. Its pathway is amino-acid biosynthesis; L-methionine biosynthesis via salvage pathway; L-methionine from S-methyl-5-thio-alpha-D-ribose 1-phosphate: step 3/6. It participates in amino-acid biosynthesis; L-methionine biosynthesis via salvage pathway; L-methionine from S-methyl-5-thio-alpha-D-ribose 1-phosphate: step 4/6. Bifunctional enzyme that catalyzes the enolization of 2,3-diketo-5-methylthiopentyl-1-phosphate (DK-MTP-1-P) into the intermediate 2-hydroxy-3-keto-5-methylthiopentenyl-1-phosphate (HK-MTPenyl-1-P), which is then dephosphorylated to form the acireductone 1,2-dihydroxy-3-keto-5-methylthiopentene (DHK-MTPene). The polypeptide is Enolase-phosphatase E1 (Drosophila grimshawi (Hawaiian fruit fly)).